The chain runs to 87 residues: U3-theraphotoxin-Hhn1l (87 aa).

A signal peptide spans 1-24 (MVNMKASMFLTFAGLVLLFVVCYA). A propeptide spanning residues 25–52 (SESEEKEFPKEMLSSIFAVDNDFKQEER) is cleaved from the precursor. Disulfide bonds link C54–C67, C61–C72, and C66–C79.

It belongs to the neurotoxin 10 (Hwtx-1) family. 51 (Hntx-8) subfamily. Hntx-8 sub-subfamily. In terms of tissue distribution, expressed by the venom gland.

The protein localises to the secreted. Its function is as follows. Ion channel inhibitor. In Cyriopagopus hainanus (Chinese bird spider), this protein is U3-theraphotoxin-Hhn1l.